The sequence spans 339 residues: Cathepsin B (339 aa).

A signal peptide spans 1 to 17 (MWWLWASLCCLLALGDA). A propeptide spans 18–79 (RSRPSFHPLS…QRVMFTEDLK (62 aa)) (activation peptide). Intrachain disulfides connect cysteine 93–cysteine 122, cysteine 105–cysteine 150, cysteine 141–cysteine 207, cysteine 142–cysteine 146, cysteine 179–cysteine 211, and cysteine 187–cysteine 198. Cysteine 108 is a catalytic residue. Asparagine 192 carries N-linked (GlcNAc...) asparagine glycosylation. Position 220 is an N6-acetyllysine (lysine 220). Active-site residues include histidine 278 and asparagine 298. Residues 334–339 (QYWEKI) constitute a propeptide that is removed on maturation.

The protein belongs to the peptidase C1 family. Dimer of a heavy chain and a light chain cross-linked by a disulfide bond. Interacts with SRPX2. Directly interacts with SHKBP1.

It localises to the lysosome. The protein localises to the melanosome. It is found in the secreted. Its subcellular location is the extracellular space. The protein resides in the apical cell membrane. The enzyme catalyses Hydrolysis of proteins with broad specificity for peptide bonds. Preferentially cleaves -Arg-Arg-|-Xaa bonds in small molecule substrates (thus differing from cathepsin L). In addition to being an endopeptidase, shows peptidyl-dipeptidase activity, liberating C-terminal dipeptides.. Thiol protease which is believed to participate in intracellular degradation and turnover of proteins. Cleaves matrix extracellular phosphoglycoprotein MEPE. Involved in the solubilization of cross-linked TG/thyroglobulin in the thyroid follicle lumen. Has also been implicated in tumor invasion and metastasis. This Macaca fascicularis (Crab-eating macaque) protein is Cathepsin B (CTSB).